A 429-amino-acid chain; its full sequence is Antho-RFamide neuropeptides type 2 (429 aa).

The signal sequence occupies residues 1 to 22 (MTTVSYVTILLTVLVQVLTSDA). Residues 23–233 (KATNNKRELS…EFQGRFGRED (211 aa)) constitute a propeptide that is removed on maturation. A compositionally biased stretch (basic and acidic residues) spans 230 to 371 (GREDQGRFGR…EDIAKEDQGR (142 aa)). Positions 230 to 429 (GREDQGRFGR…KSDDALAKIS (200 aa)) are disordered. Residue Gln-234 is modified to Pyrrolidone carboxylic acid. At Phe-237 the chain carries Phenylalanine amide. Residues 239–241 (RED) constitute a propeptide that is removed on maturation. Gln-242 is modified (pyrrolidone carboxylic acid). A Phenylalanine amide modification is found at Phe-245. A propeptide spanning residues 247–249 (RED) is cleaved from the precursor. Gln-250 is subject to Pyrrolidone carboxylic acid. The residue at position 253 (Phe-253) is a Phenylalanine amide. The propeptide occupies 255 to 257 (RED). The residue at position 258 (Gln-258) is a Pyrrolidone carboxylic acid. At Phe-261 the chain carries Phenylalanine amide. The propeptide occupies 263 to 265 (RED). Position 266 is a pyrrolidone carboxylic acid (Gln-266). Residue Phe-269 is modified to Phenylalanine amide. A propeptide spanning residues 271 to 273 (RED) is cleaved from the precursor. Gln-274 carries the post-translational modification Pyrrolidone carboxylic acid. Phenylalanine amide is present on Phe-277. A propeptide spanning residues 279 to 289 (RELQGRFGRED) is cleaved from the precursor. Gln-290 bears the Pyrrolidone carboxylic acid mark. A Phenylalanine amide modification is found at Phe-293. Residues 295–297 (RED) constitute a propeptide that is removed on maturation. At Gln-298 the chain carries Pyrrolidone carboxylic acid. Phenylalanine amide is present on Phe-301. Residues 303–305 (RED) constitute a propeptide that is removed on maturation. Gln-306 is modified (pyrrolidone carboxylic acid). The residue at position 309 (Phe-309) is a Phenylalanine amide. Positions 311-321 (RELQGRFGRED) are excised as a propeptide. Residue Gln-322 is modified to Pyrrolidone carboxylic acid. Phe-325 is subject to Phenylalanine amide. Positions 327–329 (RED) are excised as a propeptide. Residue Gln-330 is modified to Pyrrolidone carboxylic acid. At Phe-333 the chain carries Phenylalanine amide. Positions 335–342 (REDLAKED) are excised as a propeptide. A Pyrrolidone carboxylic acid modification is found at Gln-343. Phe-346 carries the post-translational modification Phenylalanine amide. The propeptide occupies 348 to 355 (REDLAKED). Gln-356 is subject to Pyrrolidone carboxylic acid. A Phenylalanine amide modification is found at Phe-359. A propeptide spanning residues 361 to 368 (REDIAKED) is cleaved from the precursor. Residue Gln-369 is modified to Pyrrolidone carboxylic acid. Phe-372 carries the phenylalanine amide modification. Residues 374–429 (RNAAAAAKKRTIDVIDIESDPKPQTRFRDGKDMQEKRKVEKKDKIEKSDDALAKIS) constitute a propeptide that is removed on maturation. A compositionally biased stretch (basic and acidic residues) spans 392 to 429 (SDPKPQTRFRDGKDMQEKRKVEKKDKIEKSDDALAKIS).

Belongs to the FARP (FMRFamide related peptide) family.

The protein localises to the secreted. Its function is as follows. Not known but it could act as a transmitter at neuromuscular synapses. The protein is Antho-RFamide neuropeptides type 2 of Anthopleura elegantissima (Green aggregating anemone).